Here is a 284-residue protein sequence, read N- to C-terminus: Nodulation protein O (284 aa).

Residues 1–27 (MNIKGSDNGSFIKGSPENDIIDGGKKN) form a disordered region. Hemolysin-type calcium-binding repeat units lie at residues 13–30 (KGSP…NDWI), 31–48 (DAGN…QDSI), 58–75 (WAGK…DDLL), 94–111 (HSGE…SDIL), and 112–129 (VAGD…GDAF). 4 residues coordinate Ca(2+): D100, D109, D118, and D127. The interval 208–222 (DRGFASAAAAATAID) is export signal (aspartic acid box).

It is found in the secreted. Its function is as follows. The NodO protein may play a role in nodule development by direct interaction with the root hair cells or some other plant surface in a calcium-dependent manner. The chain is Nodulation protein O (nodO) from Rhizobium leguminosarum bv. viciae.